A 676-amino-acid chain; its full sequence is Mediator of RNA polymerase II transcription subunit 17 (676 aa).

Disordered stretches follow at residues 27 to 68 and 117 to 176; these read IGSK…QFSN and IEND…TQDT. Over residues 29–40 the composition is skewed to low complexity; it reads SKSTSPHSNSTS. 2 stretches are compositionally biased toward basic and acidic residues: residues 47-56 and 120-134; these read HNTENEEVDN and DNGK…KAED. Over residues 135-145 the composition is skewed to acidic residues; sequence GIDTMDIDQND. The span at 146–160 shows a compositional bias: polar residues; sequence NSEANTNDIGYNEWS.

This sequence belongs to the Mediator complex subunit 17 family. Component of the Mediator complex.

It is found in the nucleus. Functionally, component of the Mediator complex, a coactivator involved in the regulated transcription of nearly all RNA polymerase II-dependent genes. Mediator functions as a bridge to convey information from gene-specific regulatory proteins to the basal RNA polymerase II transcription machinery. Mediator is recruited to promoters by direct interactions with regulatory proteins and serves as a scaffold for the assembly of a functional preinitiation complex with RNA polymerase II and the general transcription factors. This is Mediator of RNA polymerase II transcription subunit 17 (SRB4) from Candida glabrata (strain ATCC 2001 / BCRC 20586 / JCM 3761 / NBRC 0622 / NRRL Y-65 / CBS 138) (Yeast).